The following is a 128-amino-acid chain: MGYFQGNDFRKITGGKKGKHRDKRKFELGSPPTETKLSTEELIEKERGMGGNIKIRVKYATFANIYDPQEKVSKKAKILSVIETPANKEYARRGIIVKGSIIQTELGKAKVTSRPGQDGTINAILIKE.

A disordered region spans residues 1–37 (MGYFQGNDFRKITGGKKGKHRDKRKFELGSPPTETKL). Residues 13–23 (TGGKKGKHRDK) are compositionally biased toward basic residues.

Belongs to the eukaryotic ribosomal protein eS8 family. In terms of assembly, part of the 30S ribosomal subunit.

The polypeptide is Small ribosomal subunit protein eS8 (Sulfurisphaera tokodaii (strain DSM 16993 / JCM 10545 / NBRC 100140 / 7) (Sulfolobus tokodaii)).